The primary structure comprises 229 residues: GTP cyclohydrolase 1 (229 aa).

The disordered stretch occupies residues 1 to 21; the sequence is MDAKIKPLRAGKSADARTDFQ. Cysteine 118, histidine 121, and cysteine 189 together coordinate Zn(2+).

The protein belongs to the GTP cyclohydrolase I family. In terms of assembly, toroid-shaped homodecamer, composed of two pentamers of five dimers.

The enzyme catalyses GTP + H2O = 7,8-dihydroneopterin 3'-triphosphate + formate + H(+). Its pathway is cofactor biosynthesis; 7,8-dihydroneopterin triphosphate biosynthesis; 7,8-dihydroneopterin triphosphate from GTP: step 1/1. The chain is GTP cyclohydrolase 1 from Rhodopseudomonas palustris (strain HaA2).